Reading from the N-terminus, the 48-residue chain is uncharacterized protein (48 aa).

A signal peptide spans Met-1–Ala-21.

This is an uncharacterized protein from Bacillus anthracis.